We begin with the raw amino-acid sequence, 863 residues long: Protein translocase subunit SecA (863 aa).

Residues Q88, 106–110 (GEGKT), and D507 contribute to the ATP site. The tract at residues 806–863 (KSHEQNEQFLSNTTESGVNENGEAQITKVPRNSPCPCGSGKKYKECHGKSGPKKGILA) is disordered. Residues 812 to 829 (EQFLSNTTESGVNENGEA) are compositionally biased toward polar residues. Zn(2+) contacts are provided by C840, C842, C851, and H852.

This sequence belongs to the SecA family. As to quaternary structure, monomer and homodimer. Part of the essential Sec protein translocation apparatus which comprises SecA, SecYEG and auxiliary proteins SecDF-YajC and YidC. Zn(2+) serves as cofactor.

The protein resides in the cell inner membrane. It localises to the cytoplasm. The enzyme catalyses ATP + H2O + cellular proteinSide 1 = ADP + phosphate + cellular proteinSide 2.. In terms of biological role, part of the Sec protein translocase complex. Interacts with the SecYEG preprotein conducting channel. Has a central role in coupling the hydrolysis of ATP to the transfer of proteins into and across the cell membrane, serving as an ATP-driven molecular motor driving the stepwise translocation of polypeptide chains across the membrane. The protein is Protein translocase subunit SecA of Campylobacter lari (strain RM2100 / D67 / ATCC BAA-1060).